Reading from the N-terminus, the 444-residue chain is Probable glycolate oxidase iron-sulfur subunit (444 aa).

2 4Fe-4S ferredoxin-type domains span residues phenylalanine 14 to glutamate 46 and glutamate 69 to glutamate 100. Positions 26, 29, 32, 36, 78, 81, 84, and 88 each coordinate [4Fe-4S] cluster.

The glycolate oxidase likely consists of several subunits including GlcD and GlcF. [4Fe-4S] cluster serves as cofactor.

Its subcellular location is the cell membrane. The catalysed reaction is glycolate + A = glyoxylate + AH2. The enzyme catalyses (R)-lactate + A = pyruvate + AH2. Its function is as follows. Component of a complex that catalyzes the oxidation of glycolate to glyoxylate. Is also able to oxidize D-lactate ((R)-lactate). Does not link directly to O(2), and 2,6-dichloroindophenol (DCIP) and phenazine methosulfate (PMS) can act as artificial electron acceptors in vitro, but the physiological molecule that functions as primary electron acceptor during glycolate oxidation is unknown. The chain is Probable glycolate oxidase iron-sulfur subunit (glcF) from Bacillus subtilis (strain 168).